The chain runs to 130 residues: Small ribosomal subunit protein uS9 (130 aa).

The protein belongs to the universal ribosomal protein uS9 family.

The protein is Small ribosomal subunit protein uS9 of Exiguobacterium sibiricum (strain DSM 17290 / CCUG 55495 / CIP 109462 / JCM 13490 / 255-15).